The sequence spans 274 residues: MIRQLNYWSRKAYLIYPFQVFVGALLSIVVSSETLNHQKETCALLKSSNIFNVIFAYKANQLWPFLFFSLAFLQIYFHYLARMDILPLPISSTETSSSYLTYTNHWPLLKNRIISIMITQYACKFVLKYLLLFLNFQFIDHVFIWTGGECSSGSKTTSAEKCRLENGKWDGGFDISGHFCFLVSISMILWMELHLFSRFVQAEDMFWVVNKWVRACLAIVCAVLVIWICILWVTAIYYHTILEKVLGCLMGFICPVFIYHILPKIGILHNYLYL.

Residues 1 to 11 (MIRQLNYWSRK) lie on the Cytoplasmic side of the membrane. The chain crosses the membrane as a helical span at residues 12–32 (AYLIYPFQVFVGALLSIVVSS). The Lumenal segment spans residues 33–60 (ETLNHQKETCALLKSSNIFNVIFAYKAN). A helical membrane pass occupies residues 61 to 81 (QLWPFLFFSLAFLQIYFHYLA). The Cytoplasmic portion of the chain corresponds to 82-124 (RMDILPLPISSTETSSSYLTYTNHWPLLKNRIISIMITQYACK). The chain crosses the membrane as a helical span at residues 125 to 145 (FVLKYLLLFLNFQFIDHVFIW). Residues 146-170 (TGGECSSGSKTTSAEKCRLENGKWD) lie on the Lumenal side of the membrane. The helical transmembrane segment at 171–191 (GGFDISGHFCFLVSISMILWM) threads the bilayer. Residue histidine 178 is part of the active site. The Cytoplasmic portion of the chain corresponds to 192-215 (ELHLFSRFVQAEDMFWVVNKWVRA). Residues 216–236 (CLAIVCAVLVIWICILWVTAI) form a helical membrane-spanning segment. Over 237–247 (YYHTILEKVLG) the chain is Lumenal. The active site involves histidine 239. Residues 248 to 268 (CLMGFICPVFIYHILPKIGIL) form a helical membrane-spanning segment. The Cytoplasmic segment spans residues 269-274 (HNYLYL).

This sequence belongs to the FIT family. Yeast FIT2A/YFT2 subfamily.

The protein localises to the endoplasmic reticulum membrane. The protein resides in the vacuole. It carries out the reaction an acyl-CoA + H2O = an acyl-4'-phosphopantetheine + adenosine 3',5'-bisphosphate + 2 H(+). It catalyses the reaction (9Z)-octadecenoyl-CoA + H2O = S-(9Z-octadecenoyl)-4'-phosphopantetheine + adenosine 3',5'-bisphosphate + 2 H(+). The enzyme catalyses (5Z,8Z,11Z,14Z)-eicosatetraenoyl-CoA + H2O = S-(5Z,8Z,11Z,14Z-eicosatetraenoyl)-4'-phosphopantetheine + adenosine 3',5'-bisphosphate + 2 H(+). The catalysed reaction is hexadecanoyl-CoA + H2O = S-hexadecanoyl-4'-phosphopantetheine + adenosine 3',5'-bisphosphate + 2 H(+). Fatty acyl-coenzyme A (CoA) diphosphatase that hydrolyzes fatty acyl-CoA to yield acyl-4'-phosphopantetheine and adenosine 3',5'-bisphosphate. Preferentially hydrolyzes unsaturated long-chain acyl-CoA substrates in the endoplasmic reticulum (ER) lumen. This catalytic activity is required for maintaining ER structure and for lipid droplets (LDs) biogenesis, which are lipid storage organelles involved in maintaining lipid and energy homeostasis. May directly bind to diacylglycerol (DAGs) and triacylglycerol, which is also important for LD biogenesis. May support directional budding of nacent LDs from the ER into the cytosol by reducing DAG levels at sites of LD formation. May play a role in the regulation of cell morphology and cytoskeletal organization. Involved in phospholipid biosynthesis. In Saccharomyces cerevisiae (strain ATCC 204508 / S288c) (Baker's yeast), this protein is Acyl-coenzyme A diphosphatase YFT2.